Here is an 890-residue protein sequence, read N- to C-terminus: Protein translocase subunit SecA (890 aa).

Residues Gln-86, 104–108 (GEGKT), and Asp-493 contribute to the ATP site. The span at 851-872 (EASHGDGDAKKAPVVKKEESGR) shows a compositional bias: basic and acidic residues. The tract at residues 851-873 (EASHGDGDAKKAPVVKKEESGRN) is disordered. Residues Cys-876, Cys-878, Cys-887, and Cys-888 each coordinate Zn(2+).

This sequence belongs to the SecA family. In terms of assembly, monomer and homodimer. Part of the essential Sec protein translocation apparatus which comprises SecA, SecYEG and auxiliary proteins SecDF. Other proteins may also be involved. The cofactor is Zn(2+).

The protein localises to the cell membrane. Its subcellular location is the cytoplasm. It carries out the reaction ATP + H2O + cellular proteinSide 1 = ADP + phosphate + cellular proteinSide 2.. Functionally, part of the Sec protein translocase complex. Interacts with the SecYEG preprotein conducting channel. Has a central role in coupling the hydrolysis of ATP to the transfer of proteins into and across the cell membrane, serving as an ATP-driven molecular motor driving the stepwise translocation of polypeptide chains across the membrane. The chain is Protein translocase subunit SecA from Alkaliphilus oremlandii (strain OhILAs) (Clostridium oremlandii (strain OhILAs)).